Here is a 746-residue protein sequence, read N- to C-terminus: WD repeat-containing and planar cell polarity effector protein fritz homolog (746 aa).

2 WD repeats span residues 326 to 374 (IQCV…TLLA) and 375 to 414 (QTEL…INIQ).

The protein belongs to the WD repeat fritz family. As to quaternary structure, component of the CPLANE (ciliogenesis and planar polarity effectors) complex, composed of INTU, FUZ and WDPCP. Interacts with CPLANE1.

The protein localises to the cell membrane. It is found in the cytoplasm. It localises to the cytoskeleton. The protein resides in the cilium axoneme. Its subcellular location is the cilium basal body. Its function is as follows. Probable effector of the planar cell polarity signaling pathway which regulates the septin cytoskeleton in both ciliogenesis and collective cell movements. Together with FUZ and WDPCP proposed to function as core component of the CPLANE (ciliogenesis and planar polarity effectors) complex involved in the recruitment of peripheral IFT-A proteins to basal bodies. Binds phosphatidylinositol 3-phosphate with highest affinity, followed by phosphatidylinositol 4-phosphate and phosphatidylinositol 5-phosphate. This is WD repeat-containing and planar cell polarity effector protein fritz homolog (WDPCP) from Homo sapiens (Human).